Reading from the N-terminus, the 782-residue chain is Phosphoribosylformylglycinamidine synthase subunit PurL (782 aa).

Residue His-50 is part of the active site. Positions 53 and 92 each coordinate ATP. Residue Glu-94 participates in Mg(2+) binding. Residues Ser-95–His-98 and Arg-117 contribute to the substrate site. Residue His-96 is the Proton acceptor of the active site. Asp-118 contacts Mg(2+). Gln-241 contributes to the substrate binding site. Asp-269 contacts Mg(2+). Glu-313–Gln-315 is a substrate binding site. ATP contacts are provided by Asp-520 and Gly-557. Position 558 (Asn-558) interacts with Mg(2+). Ser-560 provides a ligand contact to substrate.

The protein belongs to the FGAMS family. Monomer. Part of the FGAM synthase complex composed of 1 PurL, 1 PurQ and 2 PurS subunits.

Its subcellular location is the cytoplasm. The catalysed reaction is N(2)-formyl-N(1)-(5-phospho-beta-D-ribosyl)glycinamide + L-glutamine + ATP + H2O = 2-formamido-N(1)-(5-O-phospho-beta-D-ribosyl)acetamidine + L-glutamate + ADP + phosphate + H(+). It participates in purine metabolism; IMP biosynthesis via de novo pathway; 5-amino-1-(5-phospho-D-ribosyl)imidazole from N(2)-formyl-N(1)-(5-phospho-D-ribosyl)glycinamide: step 1/2. Its function is as follows. Part of the phosphoribosylformylglycinamidine synthase complex involved in the purines biosynthetic pathway. Catalyzes the ATP-dependent conversion of formylglycinamide ribonucleotide (FGAR) and glutamine to yield formylglycinamidine ribonucleotide (FGAM) and glutamate. The FGAM synthase complex is composed of three subunits. PurQ produces an ammonia molecule by converting glutamine to glutamate. PurL transfers the ammonia molecule to FGAR to form FGAM in an ATP-dependent manner. PurS interacts with PurQ and PurL and is thought to assist in the transfer of the ammonia molecule from PurQ to PurL. This chain is Phosphoribosylformylglycinamidine synthase subunit PurL, found in Cyanothece sp. (strain PCC 7425 / ATCC 29141).